Consider the following 274-residue polypeptide: Large ribosomal subunit protein uL2 (274 aa).

Residues leucine 214–lysine 274 are disordered.

The protein belongs to the universal ribosomal protein uL2 family. As to quaternary structure, part of the 50S ribosomal subunit. Forms a bridge to the 30S subunit in the 70S ribosome.

In terms of biological role, one of the primary rRNA binding proteins. Required for association of the 30S and 50S subunits to form the 70S ribosome, for tRNA binding and peptide bond formation. It has been suggested to have peptidyltransferase activity; this is somewhat controversial. Makes several contacts with the 16S rRNA in the 70S ribosome. This chain is Large ribosomal subunit protein uL2, found in Flavobacterium johnsoniae (strain ATCC 17061 / DSM 2064 / JCM 8514 / BCRC 14874 / CCUG 350202 / NBRC 14942 / NCIMB 11054 / UW101) (Cytophaga johnsonae).